A 198-amino-acid chain; its full sequence is Glycerol-3-phosphate acyltransferase (198 aa).

The next 5 helical transmembrane spans lie at M1–F21, H77–L97, M111–L131, I136–I156, and G157–K177.

This sequence belongs to the PlsY family. Probably interacts with PlsX.

The protein localises to the cell inner membrane. The catalysed reaction is an acyl phosphate + sn-glycerol 3-phosphate = a 1-acyl-sn-glycero-3-phosphate + phosphate. It participates in lipid metabolism; phospholipid metabolism. Functionally, catalyzes the transfer of an acyl group from acyl-phosphate (acyl-PO(4)) to glycerol-3-phosphate (G3P) to form lysophosphatidic acid (LPA). This enzyme utilizes acyl-phosphate as fatty acyl donor, but not acyl-CoA or acyl-ACP. This chain is Glycerol-3-phosphate acyltransferase, found in Prochlorococcus marinus (strain MIT 9515).